The following is a 56-amino-acid chain: Large ribosomal subunit protein bL32 (56 aa).

Residues 1 to 37 form a disordered region; the sequence is MAVQQNKKSRSKRGMRRSHDALSTAQLSVDATSGELH. A compositionally biased stretch (basic residues) spans 7–16; that stretch reads KKSRSKRGMR. The span at 21 to 31 shows a compositional bias: polar residues; sequence ALSTAQLSVDA.

The protein belongs to the bacterial ribosomal protein bL32 family.

This chain is Large ribosomal subunit protein bL32, found in Shewanella pealeana (strain ATCC 700345 / ANG-SQ1).